The primary structure comprises 197 residues: Imidazoleglycerol-phosphate dehydratase (197 aa).

This sequence belongs to the imidazoleglycerol-phosphate dehydratase family.

It is found in the cytoplasm. The catalysed reaction is D-erythro-1-(imidazol-4-yl)glycerol 3-phosphate = 3-(imidazol-4-yl)-2-oxopropyl phosphate + H2O. The protein operates within amino-acid biosynthesis; L-histidine biosynthesis; L-histidine from 5-phospho-alpha-D-ribose 1-diphosphate: step 6/9. This is Imidazoleglycerol-phosphate dehydratase (hisB) from Streptomyces coelicolor (strain ATCC BAA-471 / A3(2) / M145).